The sequence spans 354 residues: MSLPLPSFLSSNNYNSSETSLLTEGPESDEEDEGPLLKQYRLKNMLGYGACSTVYLAVDVSTNIEYAIKEFKKTSLRRREKFRLMQLEKELGSFNDMDSSTIEDQIRNQEKKDPYYYIRKELDVLKVLDHENVVKLYQVINSDYKDSLCMVLNYCPGGKLASVDHGISFDPMPLETCRKSFRQLVLAVNYIHGKGVIHRDIKPDNILFKENNNLCVIDFGLAEFLPKDGFVKPASGTPAFMAPELFDNELKKIKGKPLDIWSMGVTLYVIAFAEFPFNGSTILDMINVIKGKSLMIPAYCNSDLRKLLERCLEKNPEKRITIEELLRDPFLTERGKHHLTSSSIVTAFSSIWEI.

A Protein kinase domain is found at 40–331 (YRLKNMLGYG…IEELLRDPFL (292 aa)). ATP-binding positions include 46-54 (LGYGACSTV) and Lys-69. The active-site Proton acceptor is the Asp-200.

It belongs to the protein kinase superfamily. Ser/Thr protein kinase family.

The protein resides in the cytoplasm. It localises to the nucleus. It catalyses the reaction L-seryl-[protein] + ATP = O-phospho-L-seryl-[protein] + ADP + H(+). The enzyme catalyses L-threonyl-[protein] + ATP = O-phospho-L-threonyl-[protein] + ADP + H(+). This chain is Serine/threonine-protein kinase ppk34 (ppk34), found in Schizosaccharomyces pombe (strain 972 / ATCC 24843) (Fission yeast).